The following is a 771-amino-acid chain: DNA helicase/primase complex-associated protein (771 aa).

It belongs to the herpesviridae HEPA family. Associates with the primase and the helicase to form the helicase-primase complex. Interacts with the origin-binding protein. Interacts with the polymerase catalytic subunit.

The protein localises to the host nucleus. Its function is as follows. Component of the helicase/primase complex. Unwinds the DNA at the replication forks and generates single-stranded DNA for both leading and lagging strand synthesis. The primase synthesizes short RNA primers on the lagging strand that the polymerase presumably elongates using dNTPs. The primase-associated factor has no known catalytic activity in the complex and may serve to facilitate the formation of the replisome by directly interacting with the origin-binding protein and the polymerase. This chain is DNA helicase/primase complex-associated protein, found in Varicella-zoster virus (strain Oka vaccine) (HHV-3).